The following is a 152-amino-acid chain: Globin-1 subunit beta (152 aa).

Residue serine 2 is modified to N-acetylserine. One can recognise a Globin domain in the interval 12 to 152 (VSNADQKDLL…SLVAVVQAAL (141 aa)). Positions 72 and 104 each coordinate heme b.

This sequence belongs to the globin family. As to quaternary structure, heterotetramer of two alpha chains and two beta chains.

The protein is Globin-1 subunit beta of Anadara trapezia (Sydney cockle).